The sequence spans 252 residues: Indole-3-glycerol phosphate synthase (252 aa).

The protein belongs to the TrpC family.

The catalysed reaction is 1-(2-carboxyphenylamino)-1-deoxy-D-ribulose 5-phosphate + H(+) = (1S,2R)-1-C-(indol-3-yl)glycerol 3-phosphate + CO2 + H2O. It functions in the pathway amino-acid biosynthesis; L-tryptophan biosynthesis; L-tryptophan from chorismate: step 4/5. In Listeria monocytogenes serotype 4a (strain HCC23), this protein is Indole-3-glycerol phosphate synthase.